The chain runs to 223 residues: MRGLFVTGTDTGVGKTEVSCALLRAARAAGLDAVGMKPAQSGHVPGEPSDAERLREASDCVEPLEAICPYTFAAPLAPAAAARLEGREVSLARVVEVARALAARHAAVVVEGAGGLLVPLTARETHADLAAALGLPVLVVARAGLGTVNHTALTVEALERRGLAVAGIVLNRTGPEDDPSVPLNPAEIARLTHREPIALLPWEPDIARRARSLGSILGAKIQF.

Position 16 (T16) interacts with Mg(2+). Residue K37 is part of the active site. S41 is a substrate binding site. D50 and E111 together coordinate Mg(2+). ATP contacts are provided by residues D50, 111-114 (EGAG), and 171-172 (NR).

It belongs to the dethiobiotin synthetase family. As to quaternary structure, homodimer. The cofactor is Mg(2+).

The protein resides in the cytoplasm. It catalyses the reaction (7R,8S)-7,8-diammoniononanoate + CO2 + ATP = (4R,5S)-dethiobiotin + ADP + phosphate + 3 H(+). It participates in cofactor biosynthesis; biotin biosynthesis; biotin from 7,8-diaminononanoate: step 1/2. Functionally, catalyzes a mechanistically unusual reaction, the ATP-dependent insertion of CO2 between the N7 and N8 nitrogen atoms of 7,8-diaminopelargonic acid (DAPA, also called 7,8-diammoniononanoate) to form a ureido ring. The polypeptide is ATP-dependent dethiobiotin synthetase BioD (Anaeromyxobacter sp. (strain K)).